A 95-amino-acid polypeptide reads, in one-letter code: Putative membrane protein insertion efficiency factor (95 aa).

This sequence belongs to the UPF0161 family.

It localises to the cell membrane. Could be involved in insertion of integral membrane proteins into the membrane. The protein is Putative membrane protein insertion efficiency factor of Lactobacillus delbrueckii subsp. bulgaricus (strain ATCC 11842 / DSM 20081 / BCRC 10696 / JCM 1002 / NBRC 13953 / NCIMB 11778 / NCTC 12712 / WDCM 00102 / Lb 14).